A 194-amino-acid polypeptide reads, in one-letter code: GTP cyclohydrolase 1 (194 aa).

Residues cysteine 83, histidine 86, and cysteine 155 each coordinate Zn(2+).

The protein belongs to the GTP cyclohydrolase I family. In terms of assembly, homomer.

It catalyses the reaction GTP + H2O = 7,8-dihydroneopterin 3'-triphosphate + formate + H(+). It participates in cofactor biosynthesis; 7,8-dihydroneopterin triphosphate biosynthesis; 7,8-dihydroneopterin triphosphate from GTP: step 1/1. The chain is GTP cyclohydrolase 1 from Streptococcus pyogenes serotype M49 (strain NZ131).